Here is a 138-residue protein sequence, read N- to C-terminus: Small ribosomal subunit protein uS11 (138 aa).

Disordered regions lie at residues 1 to 29 (MPPK…PHGA) and 117 to 138 (GAIS…RRRV). Residues 13–22 (KGQKTRRREK) show a composition bias toward basic residues.

This sequence belongs to the universal ribosomal protein uS11 family. Part of the 30S ribosomal subunit. Interacts with proteins S7 and S18. Binds to IF-3.

Functionally, located on the platform of the 30S subunit, it bridges several disparate RNA helices of the 16S rRNA. Forms part of the Shine-Dalgarno cleft in the 70S ribosome. The chain is Small ribosomal subunit protein uS11 from Mycobacterium ulcerans (strain Agy99).